Here is a 60-residue protein sequence, read N- to C-terminus: ATP synthase subunit J, mitochondrial (60 aa).

Residues 13 to 32 (ILKPMLPFFLGGAIVFYGTV) traverse the membrane as a helical segment.

This sequence belongs to the ATPase j subunit family. As to quaternary structure, F-type ATPases have 2 components, CF(1) - the catalytic core - and CF(0) - the membrane proton channel. In yeast, the dimeric form of ATP synthase consists of 17 polypeptides: alpha, beta, gamma, delta, epsilon, 4 (B), 5 (OSCP), 6 (A), 8, 9 (C), d, E (Tim11), f, g, h, i/j and k.

The protein resides in the mitochondrion membrane. Mitochondrial membrane ATP synthase (F(1)F(0) ATP synthase or Complex V) produces ATP from ADP in the presence of a proton gradient across the membrane which is generated by electron transport complexes of the respiratory chain. F-type ATPases consist of two structural domains, F(1) - containing the extramembraneous catalytic core and F(0) - containing the membrane proton channel, linked together by a central stalk and a peripheral stalk. During catalysis, ATP synthesis in the catalytic domain of F(1) is coupled via a rotary mechanism of the central stalk subunits to proton translocation. Part of the complex F(0) domain. Minor subunit located with subunit a in the membrane. This chain is ATP synthase subunit J, mitochondrial (atp18), found in Schizosaccharomyces pombe (strain 972 / ATCC 24843) (Fission yeast).